Here is a 104-residue protein sequence, read N- to C-terminus: Circadian clock oscillator protein KaiB (104 aa).

The protein belongs to the KaiB family. The KaiABC complex composition changes during the circadian cycle to control KaiC phosphorylation. Complexes KaiC(6), KaiA(2-4):KaiC(6), KaiB(6):KaiC(6) and KaiC(6):KaiB(6):KaiA(12) are among the most important forms, many form cooperatively. Undergoes a major conformational rearrangment; in the free state forms homotetramers as a dimer of dimers. When bound to the CI domain of KaiC switches to a monomeric thioredoxin-fold (KaiB(fs)). KaiB(fs) binds CikA, leading it to dephosphorylate phospho-RpaA.

In terms of biological role, key component of the KaiABC oscillator complex, which constitutes the main circadian regulator in cyanobacteria. Complex composition changes during the circadian cycle to control KaiC phosphorylation. KaiA stimulates KaiC autophosphorylation, while KaiB sequesters KaiA, leading to KaiC autodephosphorylation. Phospho-Ser-431 KaiC accumulation triggers binding of KaiB to form the KaiB(6):KaiC(6) complex, leading to changes in output regulators CikA and SasA. KaiB switches to a thioredoxin-like fold (KaiB(fs)) when bound to KaiC. KaiB(6):KaiC(6) formation exposes a site for KaiA binding that sequesters KaiA from KaiC, making the KaiC(6):KaiB(6):KaiA(12) complex that results in KaiC autodephosphorylation. Its function is as follows. A metamorphic protein which reversibly switches between an inactive tetrameric fold and a rare, thioredoxin-like monomeric fold (KaiB(fs)). KaiB(fs) binds phospho-KaiC, KaiA and CikA. KaiA and CikA compete for binding to KaiB(fs), and KaiB(fs) and SasA compete for binding to KaiC, thus the clock oscillator and output signal pathway are tightly coupled. The chain is Circadian clock oscillator protein KaiB from Nostoc punctiforme (strain ATCC 29133 / PCC 73102).